A 252-amino-acid chain; its full sequence is Imidazole glycerol phosphate synthase subunit HisF (252 aa).

Active-site residues include Asp-11 and Asp-130.

It belongs to the HisA/HisF family. As to quaternary structure, heterodimer of HisH and HisF.

It localises to the cytoplasm. It catalyses the reaction 5-[(5-phospho-1-deoxy-D-ribulos-1-ylimino)methylamino]-1-(5-phospho-beta-D-ribosyl)imidazole-4-carboxamide + L-glutamine = D-erythro-1-(imidazol-4-yl)glycerol 3-phosphate + 5-amino-1-(5-phospho-beta-D-ribosyl)imidazole-4-carboxamide + L-glutamate + H(+). The protein operates within amino-acid biosynthesis; L-histidine biosynthesis; L-histidine from 5-phospho-alpha-D-ribose 1-diphosphate: step 5/9. In terms of biological role, IGPS catalyzes the conversion of PRFAR and glutamine to IGP, AICAR and glutamate. The HisF subunit catalyzes the cyclization activity that produces IGP and AICAR from PRFAR using the ammonia provided by the HisH subunit. This chain is Imidazole glycerol phosphate synthase subunit HisF, found in Bacillus cereus (strain AH187).